A 1858-amino-acid chain; its full sequence is Protein dop1 (1858 aa).

Residues 1 to 23 are compositionally biased toward low complexity; sequence MSLDPSSFPRSNSPASSDSSLTR. Disordered stretches follow at residues 1–33 and 1052–1092; these read MSLD…EGSL and PPPP…LPSP. Residues 1070-1079 show a composition bias toward polar residues; it reads TSPSLLSFTS. The segment at 1838-1854 is transactivation; sequence NLEACRDDLLADLFNES.

This sequence belongs to the DOP1 family.

It is found in the golgi apparatus membrane. Its function is as follows. Involved in cellular morphogenesis. Required for traffic between late Golgi and early endosomes, and for the normal structure and organization of the endoplasmic reticulum. During the vegetative phase, contributes to the highly polarized hyphal growth. Required for the reproductive cycle. Involved in conidiophore initiation and differentiation. May have a role in controlling the balance between vegetative proliferation and developmental morphogenesis. The chain is Protein dop1 (dop1) from Emericella nidulans (strain FGSC A4 / ATCC 38163 / CBS 112.46 / NRRL 194 / M139) (Aspergillus nidulans).